The sequence spans 184 residues: ADP-ribosylation factor-like protein 2 (184 aa).

Gly2 carries N-myristoyl glycine lipidation. GTP-binding positions include 23-30, 66-70, and 125-128; these read GLDNAGKT, DIGGQ, and NKQD.

The protein belongs to the small GTPase superfamily. Arf family.

Functionally, may be involved in trafficking events within the endosomal system. This is ADP-ribosylation factor-like protein 2 (arl2) from Dictyostelium discoideum (Social amoeba).